The following is an 82-amino-acid chain: Large ribosomal subunit protein uL23 (82 aa).

This sequence belongs to the universal ribosomal protein uL23 family. Part of the 50S ribosomal subunit. Contacts protein L29.

In terms of biological role, binds to 23S rRNA. One of the proteins that surrounds the polypeptide exit tunnel on the outside of the ribosome. The sequence is that of Large ribosomal subunit protein uL23 from Methanospirillum hungatei JF-1 (strain ATCC 27890 / DSM 864 / NBRC 100397 / JF-1).